Reading from the N-terminus, the 275-residue chain is Formamidopyrimidine-DNA glycosylase (275 aa).

The active-site Schiff-base intermediate with DNA is P2. Catalysis depends on E3, which acts as the Proton donor. Catalysis depends on K58, which acts as the Proton donor; for beta-elimination activity. The DNA site is built by H93, R111, and R156. The FPG-type zinc finger occupies 241-275 (FVYDRAGLPCRVCGTPIRQIVQGQRSTYFCPTCQR). The active-site Proton donor; for delta-elimination activity is R265.

Belongs to the FPG family. As to quaternary structure, monomer. Zn(2+) serves as cofactor.

It catalyses the reaction Hydrolysis of DNA containing ring-opened 7-methylguanine residues, releasing 2,6-diamino-4-hydroxy-5-(N-methyl)formamidopyrimidine.. It carries out the reaction 2'-deoxyribonucleotide-(2'-deoxyribose 5'-phosphate)-2'-deoxyribonucleotide-DNA = a 3'-end 2'-deoxyribonucleotide-(2,3-dehydro-2,3-deoxyribose 5'-phosphate)-DNA + a 5'-end 5'-phospho-2'-deoxyribonucleoside-DNA + H(+). Involved in base excision repair of DNA damaged by oxidation or by mutagenic agents. Acts as a DNA glycosylase that recognizes and removes damaged bases. Has a preference for oxidized purines, such as 7,8-dihydro-8-oxoguanine (8-oxoG). Has AP (apurinic/apyrimidinic) lyase activity and introduces nicks in the DNA strand. Cleaves the DNA backbone by beta-delta elimination to generate a single-strand break at the site of the removed base with both 3'- and 5'-phosphates. The polypeptide is Formamidopyrimidine-DNA glycosylase (Burkholderia ambifaria (strain MC40-6)).